We begin with the raw amino-acid sequence, 234 residues long: MRKTRLWGLLWMLFVSELRAATKLTEEKYELKEGQTLDVKCDYTLEKFASSQKAWQIIRDGEMPKTLACTERPSKNSHPVQVGRIILEDYHDHGLLRVRMVNLQVEDSGLYQCVIYQPPKEPHMLFDRIRLVVTKGFSGTPGSNENSTQNVYKIPPTTTKALCPLYTSPRTVTQAPPKSTADVSTPDSEINLTNVTDIIRVPVFNIVILLAGGFLSKSLVFSVLFAVTLRSFVP.

Positions 1–20 (MRKTRLWGLLWMLFVSELRA) are cleaved as a signal peptide. Residues 21–205 (ATKLTEEKYE…TDIIRVPVFN (185 aa)) lie on the Extracellular side of the membrane. The Ig-like V-type domain occupies 26-134 (EEKYELKEGQ…LFDRIRLVVT (109 aa)). C41 and C113 are disulfide-bonded. 3 N-linked (GlcNAc...) asparagine glycosylation sites follow: N146, N191, and N194. The chain crosses the membrane as a helical span at residues 206 to 226 (IVILLAGGFLSKSLVFSVLFA). Residues 227–234 (VTLRSFVP) lie on the Cytoplasmic side of the membrane.

Monomer. Homomultimer; when activated. Interacts with TYROBP/DAP12. Interacts with TLR4. In terms of processing, glycosylated. In terms of tissue distribution, mostly expressed by immune cells of the myeloid lineage, such as monocytes, macrophages, neutrophils and dendritic cells. Expression is associated with a mature stage of myeloid development. Highly expressed in adult liver, lung and spleen than in corresponding fetal tissue. Also expressed in the lymph node, placenta, spinal cord and heart tissues. Isoform 2 was detected in the lung, liver and mature monocytes.

It localises to the cell membrane. It is found in the secreted. Functionally, cell surface receptor that plays important roles in innate and adaptive immunity by amplifying inflammatory responses. Upon activation by various ligands such as PGLYRP1, HMGB1 or HSP70, multimerizes and forms a complex with transmembrane adapter TYROBP/DAP12. In turn, initiates a SYK-mediated cascade of tyrosine phosphorylation, activating multiple downstream mediators such as BTK, MAPK1, MAPK3 or phospholipase C-gamma. This cascade promotes the neutrophil- and macrophage-mediated release of pro-inflammatory cytokines and/or chemokines, as well as their migration and thereby amplifies inflammatory responses that are triggered by bacterial and fungal infections. By also promoting the amplification of inflammatory signals that are initially triggered by Toll-like receptor (TLR) and NOD-like receptor engagement, plays a major role in the pathophysiology of acute and chronic inflammatory diseases of different etiologies including septic shock and atherosclerosis. Its function is as follows. Acts as a decoy receptor, counterbalancing TREM1 pro-inflammatory activity through the neutralization of its ligand. The protein is Triggering receptor expressed on myeloid cells 1 (TREM1) of Homo sapiens (Human).